Reading from the N-terminus, the 79-residue chain is Raniseptin-3 (79 aa).

An N-terminal signal peptide occupies residues Met-1–Cys-22. Positions Glu-23 to Glu-49 are excised as a propeptide.

The protein belongs to the frog skin active peptide (FSAP) family. Dermaseptin subfamily. In terms of tissue distribution, expressed by the skin glands.

It is found in the secreted. Has antibacterial activity. This Boana raniceps (Chaco tree frog) protein is Raniseptin-3.